The chain runs to 1072 residues: Guanylyl cyclase C (1072 aa).

Residues 1 to 22 (MTSLLGLAVRLLLFQPTLMFWA) form the signal peptide. The Extracellular segment spans residues 23–429 (SQVRQKCHNG…PNDVPGLGPQ (407 aa)). 7 N-linked (GlcNAc...) asparagine glycosylation sites follow: Asn-31, Asn-74, Asn-78, Asn-187, Asn-194, Asn-306, and Asn-401. Residues 430-453 (ILMIAVFTLTGIVVVLLLIALLVL) form a helical membrane-spanning segment. Over 454–1072 (RKYRRDHELR…NNSDHDSTYF (619 aa)) the chain is Cytoplasmic. Positions 488–748 (LKIDDDRRRD…KIESTLAKIF (261 aa)) constitute a Protein kinase domain. Residues 823–953 (TIYFSDIVGF…DTVNTASRME (131 aa)) enclose the Guanylate cyclase domain.

This sequence belongs to the adenylyl cyclase class-4/guanylyl cyclase family. In terms of assembly, homotrimer. Interacts via its C-terminal region with PDZK2. Interacts with the lectin chaperone VIP36. Post-translationally, glycosylation at Asn-74 and/or Asn-78 is required for interaction with VIP36 while glycosylation at Asn-401 modulates ligand-mediated GC-C activation.

Its subcellular location is the cell membrane. It localises to the endoplasmic reticulum membrane. It catalyses the reaction GTP = 3',5'-cyclic GMP + diphosphate. Functionally, guanylyl cyclase that catalyzes synthesis of cyclic GMP (cGMP) from GTP. Receptor for the E.coli heat-stable enterotoxin; E.coli enterotoxin markedly stimulates the accumulation of cGMP in mammalian cells expressing GUCY2C. This Rattus norvegicus (Rat) protein is Guanylyl cyclase C (Gucy2c).